A 105-amino-acid polypeptide reads, in one-letter code: Ribosomal silencing factor RsfS (105 aa).

This sequence belongs to the Iojap/RsfS family. Interacts with ribosomal protein uL14 (rplN).

Its subcellular location is the cytoplasm. Functionally, functions as a ribosomal silencing factor. Interacts with ribosomal protein uL14 (rplN), blocking formation of intersubunit bridge B8. Prevents association of the 30S and 50S ribosomal subunits and the formation of functional ribosomes, thus repressing translation. The chain is Ribosomal silencing factor RsfS from Escherichia coli O6:H1 (strain CFT073 / ATCC 700928 / UPEC).